We begin with the raw amino-acid sequence, 245 residues long: tRNA pseudouridine synthase A 2 (245 aa).

The active-site Nucleophile is the Asp-53. Tyr-111 is a binding site for substrate.

The protein belongs to the tRNA pseudouridine synthase TruA family. Homodimer.

The enzyme catalyses uridine(38/39/40) in tRNA = pseudouridine(38/39/40) in tRNA. Functionally, formation of pseudouridine at positions 38, 39 and 40 in the anticodon stem and loop of transfer RNAs. In Bacillus thuringiensis subsp. konkukian (strain 97-27), this protein is tRNA pseudouridine synthase A 2.